We begin with the raw amino-acid sequence, 479 residues long: D-hydantoinase/dihydropyrimidinase (479 aa).

Residues H59, H61, and K150 each coordinate Zn(2+). K150 bears the N6-carboxylysine mark. Y155 is a substrate binding site. Positions 183 and 239 each coordinate Zn(2+). S289 is a binding site for substrate. D316 is a binding site for Zn(2+). A substrate-binding site is contributed by N337.

It belongs to the metallo-dependent hydrolases superfamily. Hydantoinase/dihydropyrimidinase family. As to quaternary structure, homotetramer. Requires Zn(2+) as cofactor. Carboxylation allows a single lysine to coordinate two zinc ions.

The catalysed reaction is 5,6-dihydrouracil + H2O = 3-(carbamoylamino)propanoate + H(+). In terms of biological role, catalyzes the hydrolysis of dihydropyrimidines and of the structurally related DL-5-mono-substituted hydantoins, to produce N-carbamoyl-D-amino acids. In Pseudomonas aeruginosa (strain ATCC 15692 / DSM 22644 / CIP 104116 / JCM 14847 / LMG 12228 / 1C / PRS 101 / PAO1), this protein is D-hydantoinase/dihydropyrimidinase (dht).